The sequence spans 142 residues: Large ribosomal subunit protein uL13 (142 aa).

This sequence belongs to the universal ribosomal protein uL13 family. Part of the 50S ribosomal subunit.

This protein is one of the early assembly proteins of the 50S ribosomal subunit, although it is not seen to bind rRNA by itself. It is important during the early stages of 50S assembly. The protein is Large ribosomal subunit protein uL13 of Baumannia cicadellinicola subsp. Homalodisca coagulata.